We begin with the raw amino-acid sequence, 207 residues long: MSDATLAADPPRLYLASASPRRRELLLQIGLTHTVLRVPAPPGEDEPQHPGEAACDYVRRTARDKAERGQAWLHSQQLPDLPLLAADTTVILDGIVLGKPADRADALRMLAALSGREHEVHAAVALCHQGRLYEDVSITRVRMRALEQAELQRYCDSGEPYGKAGAYGIQGLAGAFVSHIAGSYTGVMGLPIYETAALLRSAGIAVP.

Aspartate 87 (proton acceptor) is an active-site residue.

The protein belongs to the Maf family. YhdE subfamily. A divalent metal cation serves as cofactor.

It localises to the cytoplasm. It catalyses the reaction dTTP + H2O = dTMP + diphosphate + H(+). The catalysed reaction is UTP + H2O = UMP + diphosphate + H(+). Nucleoside triphosphate pyrophosphatase that hydrolyzes dTTP and UTP. May have a dual role in cell division arrest and in preventing the incorporation of modified nucleotides into cellular nucleic acids. In Bordetella pertussis (strain Tohama I / ATCC BAA-589 / NCTC 13251), this protein is dTTP/UTP pyrophosphatase.